A 581-amino-acid chain; its full sequence is Activating signal cointegrator 1 (581 aa).

A2 carries the N-acetylalanine modification. Residues 97-118 (KSGDHLKRGRKKGRNRQEVPAF) form a disordered region. The segment at 171–187 (CDCLGQKHKLINNCLIC) adopts a C4-type zinc-finger fold. Positions 200 to 300 (CLFCGTLVCT…ASDSNQWLSK (101 aa)) are mediates interaction with DDRGK1. S276 is modified (phosphoserine). Y289 is subject to Phosphotyrosine. Residues 300 to 400 (KLERETLQKR…WVDHTGAASQ (101 aa)) are mediates interaction with UFL1. Residues K324, K325, and K334 each participate in a glycyl lysine isopeptide (Lys-Gly) (interchain with G-Cter in UFM1) cross-link. S341 bears the Phosphoserine mark. Residue K367 forms a Glycyl lysine isopeptide (Lys-Gly) (interchain with G-Cter in UFM1) linkage. Residues 437-531 (LSVHQPWASL…FKEQFPDISQ (95 aa)) form the ASCH domain.

As to quaternary structure, interacts with the thyroid hormone receptor/TR (via the ligand-binding domain); this interaction requires the presence of thyroid hormone. Interacts with the androgen receptor/AR; in an androgen, testosterone and dihydrotestosterone-dependent manner. Interacts with ESR1 (estrogen ligand-bound); competes with UFSP2. Interacts with UFSP2; competes with ligand-bound ESR1. Interacts with DDRGK1 and UFL1; the interaction with DDRGK1 is direct. Interacts with NCOA1. Interacts with EP300. Part of the ASC-1 complex, that contains TRIP4, ASCC1, ASCC2 and ASCC3. Identified in the RQT (ribosome quality control trigger) complex, that contains ASCC2, ASCC3 and TRIP4. Interacts with NEK6. Interacts with CSRP1. Interacts with ZCCHC4. In terms of processing, phosphorylated by NEK6. Polyufmylated by the UFM1-conjugating system composed of the enzymes UBA5, UFC1 and UFL1. Deufmylated by the protease UFSP2. Ufmylation of TRIP4 is promoted by ligand-bound nuclear receptors that compete with UFSP2 for interaction with TRIP4. Nuclear receptors-induced ufmylation promotes the recruitment of additional transcriptional coactivators like EP300 and NCOA1 and therefore the assembly of a coactivator complex facilitating nuclear receptor-mediated transcription.

It localises to the nucleus. The protein localises to the cytoplasm. The protein resides in the cytosol. Its subcellular location is the cytoskeleton. It is found in the microtubule organizing center. It localises to the centrosome. Functionally, transcription coactivator which associates with nuclear receptors, transcriptional coactivators including EP300, CREBBP and NCOA1, and basal transcription factors like TBP and TFIIA to facilitate nuclear receptors-mediated transcription. May thereby play an important role in establishing distinct coactivator complexes under different cellular conditions. Plays a role in thyroid hormone receptor and estrogen receptor transactivation. Also involved in androgen receptor transactivation. Plays a pivotal role in the transactivation of NF-kappa-B, SRF and AP1. Acts as a mediator of transrepression between nuclear receptor and either AP1 or NF-kappa-B. May play a role in the development of neuromuscular junction. May play a role in late myogenic differentiation. Also functions as part of the RQC trigger (RQT) complex that activates the ribosome quality control (RQC) pathway, a pathway that degrades nascent peptide chains during problematic translation. This Homo sapiens (Human) protein is Activating signal cointegrator 1.